The chain runs to 339 residues: Homeobox protein Hox-D13 (339 aa).

Residues 1–33 (MSRSGTWDMDGLRADGGAAGAAPASSSSSVAAP) form a disordered region. Positions 20-33 (GAAPASSSSSVAAP) are enriched in low complexity. A DNA-binding region (homeobox) is located at residues 272–331 (GRKKRVPYTKLQLKELENEYAINKFINKDKRRRISAATNLSERQVTIWFQNRRVKDKKIV).

Belongs to the Abd-B homeobox family.

Its subcellular location is the nucleus. In terms of biological role, sequence-specific transcription factor that binds gene promoters and activates their transcription. Part of a developmental regulatory system that provides cells with specific positional identities on the anterior-posterior axis. This is Homeobox protein Hox-D13 (Hoxd13) from Mus musculus (Mouse).